Consider the following 314-residue polypeptide: tRNA-cytidine(32) 2-sulfurtransferase (314 aa).

Positions 58-63 (SGGKDS) match the PP-loop motif motif. Positions 133, 136, and 224 each coordinate [4Fe-4S] cluster.

Belongs to the TtcA family. As to quaternary structure, homodimer. Mg(2+) is required as a cofactor. [4Fe-4S] cluster serves as cofactor.

Its subcellular location is the cytoplasm. It carries out the reaction cytidine(32) in tRNA + S-sulfanyl-L-cysteinyl-[cysteine desulfurase] + AH2 + ATP = 2-thiocytidine(32) in tRNA + L-cysteinyl-[cysteine desulfurase] + A + AMP + diphosphate + H(+). Its pathway is tRNA modification. Catalyzes the ATP-dependent 2-thiolation of cytidine in position 32 of tRNA, to form 2-thiocytidine (s(2)C32). The sulfur atoms are provided by the cysteine/cysteine desulfurase (IscS) system. The polypeptide is tRNA-cytidine(32) 2-sulfurtransferase (Polaromonas naphthalenivorans (strain CJ2)).